A 395-amino-acid polypeptide reads, in one-letter code: Putative 8-amino-7-oxononanoate synthase (395 aa).

Position 23 (arginine 23) interacts with substrate. 110 to 111 (GY) lines the pyridoxal 5'-phosphate pocket. Histidine 135 contributes to the substrate binding site. Pyridoxal 5'-phosphate-binding positions include serine 182, 207–210 (DEAH), and 239–242 (TFSK). At lysine 242 the chain carries N6-(pyridoxal phosphate)lysine. Threonine 356 is a binding site for substrate.

This sequence belongs to the class-II pyridoxal-phosphate-dependent aminotransferase family. BioF subfamily. Homodimer. It depends on pyridoxal 5'-phosphate as a cofactor.

It carries out the reaction 6-carboxyhexanoyl-[ACP] + L-alanine + H(+) = (8S)-8-amino-7-oxononanoate + holo-[ACP] + CO2. The protein operates within cofactor biosynthesis; biotin biosynthesis. Its function is as follows. Catalyzes the decarboxylative condensation of pimeloyl-[acyl-carrier protein] and L-alanine to produce 8-amino-7-oxononanoate (AON), [acyl-carrier protein], and carbon dioxide. The sequence is that of Putative 8-amino-7-oxononanoate synthase (bioF) from Bacillus cereus (strain G9842).